A 70-amino-acid chain; its full sequence is ATP synthase subunit c (70 aa).

2 consecutive transmembrane segments (helical) span residues 4-24 (IAAA…NGLI) and 49-69 (GIAL…LAFF).

Belongs to the ATPase C chain family. F-type ATPases have 2 components, F(1) - the catalytic core - and F(0) - the membrane proton channel. F(1) has five subunits: alpha(3), beta(3), gamma(1), delta(1), epsilon(1). F(0) has three main subunits: a(1), b(2) and c(10-14). The alpha and beta chains form an alternating ring which encloses part of the gamma chain. F(1) is attached to F(0) by a central stalk formed by the gamma and epsilon chains, while a peripheral stalk is formed by the delta and b chains. The F(1)F(0) complex interacts with SpoIIIJ and YqjG; YqgA is found in the same complex.

The protein resides in the cell membrane. Its function is as follows. F(1)F(0) ATP synthase produces ATP from ADP in the presence of a proton or sodium gradient. F-type ATPases consist of two structural domains, F(1) containing the extramembraneous catalytic core and F(0) containing the membrane proton channel, linked together by a central stalk and a peripheral stalk. During catalysis, ATP synthesis in the catalytic domain of F(1) is coupled via a rotary mechanism of the central stalk subunits to proton translocation. Key component of the F(0) channel; it plays a direct role in translocation across the membrane. A homomeric c-ring of between 10-14 subunits forms the central stalk rotor element with the F(1) delta and epsilon subunits. The sequence is that of ATP synthase subunit c from Bacillus subtilis (strain 168).